A 188-amino-acid chain; its full sequence is Pyridoxal 5'-phosphate synthase subunit PdxT (188 aa).

47–49 (GES) is a binding site for L-glutamine. The active-site Nucleophile is the Cys-79. Residues Arg-105 and 134–135 (IR) contribute to the L-glutamine site. Active-site charge relay system residues include His-170 and Glu-172.

Belongs to the glutaminase PdxT/SNO family. In terms of assembly, in the presence of PdxS, forms a dodecamer of heterodimers. Only shows activity in the heterodimer.

It carries out the reaction aldehydo-D-ribose 5-phosphate + D-glyceraldehyde 3-phosphate + L-glutamine = pyridoxal 5'-phosphate + L-glutamate + phosphate + 3 H2O + H(+). The enzyme catalyses L-glutamine + H2O = L-glutamate + NH4(+). The protein operates within cofactor biosynthesis; pyridoxal 5'-phosphate biosynthesis. Catalyzes the hydrolysis of glutamine to glutamate and ammonia as part of the biosynthesis of pyridoxal 5'-phosphate. The resulting ammonia molecule is channeled to the active site of PdxS. The chain is Pyridoxal 5'-phosphate synthase subunit PdxT from Listeria welshimeri serovar 6b (strain ATCC 35897 / DSM 20650 / CCUG 15529 / CIP 8149 / NCTC 11857 / SLCC 5334 / V8).